The primary structure comprises 348 residues: Isopentenyl-diphosphate delta-isomerase (348 aa).

Substrate is bound at residue 5-6 (RK). Residues S61, 62–64 (SMT), S92, and N120 each bind FMN. Substrate is bound at residue 92–94 (SMR). A substrate-binding site is contributed by Q159. E160 serves as a coordination point for Mg(2+). Residues K189, S214, T219, 269 to 271 (GLR), and 290 to 291 (AR) contribute to the FMN site.

This sequence belongs to the IPP isomerase type 2 family. In terms of assembly, homooctamer. Dimer of tetramers. The cofactor is FMN. NADPH serves as cofactor. It depends on Mg(2+) as a cofactor.

Its subcellular location is the cytoplasm. The enzyme catalyses isopentenyl diphosphate = dimethylallyl diphosphate. Involved in the biosynthesis of isoprenoids. Catalyzes the 1,3-allylic rearrangement of the homoallylic substrate isopentenyl (IPP) to its allylic isomer, dimethylallyl diphosphate (DMAPP). This chain is Isopentenyl-diphosphate delta-isomerase, found in Thermoplasma acidophilum (strain ATCC 25905 / DSM 1728 / JCM 9062 / NBRC 15155 / AMRC-C165).